Here is a 355-residue protein sequence, read N- to C-terminus: Guanine nucleotide-binding protein subunit alpha-14 (355 aa).

Residues 34-355 form the G-alpha domain; that stretch reads RELKLLLLGT…QLNLREFNLV (322 aa). The tract at residues 37–50 is G1 motif; that stretch reads KLLLLGTGESGKST. Residues 42–49, 176–182, 201–205, 270–273, and A327 each bind GTP; these read GTGESGKS, LRVRVPT, DVGGQ, and NKKD. S49 contributes to the Mg(2+) binding site. The segment at 174 to 182 is G2 motif; it reads DVLRVRVPT. Position 179 is an ADP-ribosylarginine; by cholera toxin (R179). Residue T182 participates in Mg(2+) binding. Residues 197–206 form a G3 motif region; it reads FRMVDVGGQR. Residues 266–273 are G4 motif; it reads ILFLNKKD. Positions 325-330 are G5 motif; it reads TCATDT.

This sequence belongs to the G-alpha family. G(q) subfamily. As to quaternary structure, g proteins are composed of 3 units; alpha, beta and gamma. The alpha chain contains the guanine nucleotide binding site.

Guanine nucleotide-binding proteins (G proteins) are involved as modulators or transducers in various transmembrane signaling systems. In Homo sapiens (Human), this protein is Guanine nucleotide-binding protein subunit alpha-14 (GNA14).